Consider the following 256-residue polypeptide: tRNA pseudouridine synthase A (256 aa).

Aspartate 52 (nucleophile) is an active-site residue. Tyrosine 110 lines the substrate pocket.

Belongs to the tRNA pseudouridine synthase TruA family. In terms of assembly, homodimer.

It carries out the reaction uridine(38/39/40) in tRNA = pseudouridine(38/39/40) in tRNA. Its function is as follows. Formation of pseudouridine at positions 38, 39 and 40 in the anticodon stem and loop of transfer RNAs. This is tRNA pseudouridine synthase A from Stenotrophomonas maltophilia (strain R551-3).